Here is a 746-residue protein sequence, read N- to C-terminus: tRNA (cytosine(34)-C(5))-methyltransferase (746 aa).

A disordered region spans residues 1 to 30 (MGRNQKQNFFAARKRQKRENGPKRTDRQAQ). The span at 18-30 (RENGPKRTDRQAQ) shows a compositional bias: basic and acidic residues. Residues 184–190 (CAAPGSK), aspartate 216, aspartate 243, and aspartate 270 each bind S-adenosyl-L-methionine. The active-site Nucleophile is the cysteine 323. Disordered stretches follow at residues 454 to 475 (QPAA…SVPW) and 701 to 746 (SAEA…VATS). Over residues 463–472 (ADGKPIEEKS) the composition is skewed to basic and acidic residues. Residues 704 to 714 (AEADSSGDGDA) are compositionally biased toward acidic residues. Residues 731-746 (AETTGTPMDTEVVATS) show a composition bias toward polar residues.

The protein belongs to the class I-like SAM-binding methyltransferase superfamily. RsmB/NOP family. TRM4 subfamily. In terms of tissue distribution, ubiquitously expressed during embryonic development. Some enrichment is observed in the proventriculus area of the foregut and in the hindgut.

It is found in the nucleus. The protein localises to the nucleolus. The enzyme catalyses cytidine(34) in tRNA precursor + S-adenosyl-L-methionine = 5-methylcytidine(34) in tRNA precursor + S-adenosyl-L-homocysteine + H(+). Its function is as follows. RNA methyltransferase that methylates tRNAs. Methylates cytosine to 5-methylcytosine (m5C) at position 34 of intron-containing tRNA(Leu)(CAA) precursors. Required for short-term memory. This chain is tRNA (cytosine(34)-C(5))-methyltransferase, found in Drosophila melanogaster (Fruit fly).